A 364-amino-acid polypeptide reads, in one-letter code: UDP-N-acetylglucosamine--N-acetylmuramyl-(pentapeptide) pyrophosphoryl-undecaprenol N-acetylglucosamine transferase 1 (364 aa).

UDP-N-acetyl-alpha-D-glucosamine contacts are provided by residues 10-12 (TGG), N124, S195, I250, and Q295.

This sequence belongs to the glycosyltransferase 28 family. MurG subfamily.

It is found in the cell membrane. It carries out the reaction di-trans,octa-cis-undecaprenyl diphospho-N-acetyl-alpha-D-muramoyl-L-alanyl-D-glutamyl-meso-2,6-diaminopimeloyl-D-alanyl-D-alanine + UDP-N-acetyl-alpha-D-glucosamine = di-trans,octa-cis-undecaprenyl diphospho-[N-acetyl-alpha-D-glucosaminyl-(1-&gt;4)]-N-acetyl-alpha-D-muramoyl-L-alanyl-D-glutamyl-meso-2,6-diaminopimeloyl-D-alanyl-D-alanine + UDP + H(+). The protein operates within cell wall biogenesis; peptidoglycan biosynthesis. Cell wall formation. Catalyzes the transfer of a GlcNAc subunit on undecaprenyl-pyrophosphoryl-MurNAc-pentapeptide (lipid intermediate I) to form undecaprenyl-pyrophosphoryl-MurNAc-(pentapeptide)GlcNAc (lipid intermediate II). This chain is UDP-N-acetylglucosamine--N-acetylmuramyl-(pentapeptide) pyrophosphoryl-undecaprenol N-acetylglucosamine transferase 1, found in Bacillus anthracis.